We begin with the raw amino-acid sequence, 485 residues long: Glutamyl-tRNA(Gln) amidotransferase subunit A (485 aa).

Catalysis depends on charge relay system residues K78 and S153. S177 (acyl-ester intermediate) is an active-site residue.

Belongs to the amidase family. GatA subfamily. As to quaternary structure, heterotrimer of A, B and C subunits.

The catalysed reaction is L-glutamyl-tRNA(Gln) + L-glutamine + ATP + H2O = L-glutaminyl-tRNA(Gln) + L-glutamate + ADP + phosphate + H(+). In terms of biological role, allows the formation of correctly charged Gln-tRNA(Gln) through the transamidation of misacylated Glu-tRNA(Gln) in organisms which lack glutaminyl-tRNA synthetase. The reaction takes place in the presence of glutamine and ATP through an activated gamma-phospho-Glu-tRNA(Gln). In Desulfatibacillum aliphaticivorans, this protein is Glutamyl-tRNA(Gln) amidotransferase subunit A.